The sequence spans 427 residues: Light-independent protochlorophyllide reductase subunit N (427 aa).

[4Fe-4S] cluster-binding residues include C29, C54, and C115.

It belongs to the BchN/ChlN family. Protochlorophyllide reductase is composed of three subunits; BchL, BchN and BchB. Forms a heterotetramer of two BchB and two BchN subunits. The cofactor is [4Fe-4S] cluster.

The catalysed reaction is chlorophyllide a + oxidized 2[4Fe-4S]-[ferredoxin] + 2 ADP + 2 phosphate = protochlorophyllide a + reduced 2[4Fe-4S]-[ferredoxin] + 2 ATP + 2 H2O. The protein operates within porphyrin-containing compound metabolism; bacteriochlorophyll biosynthesis (light-independent). In terms of biological role, component of the dark-operative protochlorophyllide reductase (DPOR) that uses Mg-ATP and reduced ferredoxin to reduce ring D of protochlorophyllide (Pchlide) to form chlorophyllide a (Chlide). This reaction is light-independent. The NB-protein (BchN-BchB) is the catalytic component of the complex. This chain is Light-independent protochlorophyllide reductase subunit N, found in Bradyrhizobium sp. (strain ORS 278).